The sequence spans 684 residues: PAN2-PAN3 deadenylation complex subunit PAN3 (684 aa).

Disordered stretches follow at residues M1 to A38, D68 to E97, and V112 to L146. Residues E21–A38 are compositionally biased toward basic and acidic residues. Residues E36–A65 form a C3H1-type zinc finger. A compositionally biased stretch (pro residues) spans V127 to P139. Positions G263–G544 are pseudokinase domain. ATP is bound by residues R326 and D375 to T382. The segment at Y387–P412 is disordered. S444–K445 is a binding site for ATP. The stretch at P545–F583 forms a coiled coil. The knob domain stretch occupies residues I584 to R684.

Belongs to the protein kinase superfamily. PAN3 family. As to quaternary structure, homodimer. Forms a heterotrimer with a catalytic subunit PAN2 to form the poly(A)-nuclease (PAN) deadenylation complex. Interacts (via PAM-2 motif) with poly(A)-binding protein PAB1 (via PABC domain), conferring substrate specificity of the enzyme complex.

Its subcellular location is the cytoplasm. Functionally, regulatory subunit of the poly(A)-nuclease (PAN) deadenylation complex, one of two cytoplasmic mRNA deadenylases involved in mRNA turnover. PAN specifically shortens poly(A) tails of RNA and the activity is stimulated by poly(A)-binding protein PAB1. PAN deadenylation is followed by rapid degradation of the shortened mRNA tails by the CCR4-NOT complex. Deadenylated mRNAs are then degraded by two alternative mechanisms, namely exosome-mediated 3'-5' exonucleolytic degradation, or deadenylation-dependent mRNA decaping and subsequent 5'-3' exonucleolytic degradation by XRN1. May also be involved in post-transcriptional maturation of mRNA poly(A) tails. PAN3 acts as a positive regulator for PAN activity, recruiting the catalytic subunit PAN2 to mRNA via its interaction with RNA and with PAB1. The polypeptide is PAN2-PAN3 deadenylation complex subunit PAN3 (Cryptococcus neoformans var. neoformans serotype D (strain B-3501A) (Filobasidiella neoformans)).